The primary structure comprises 475 residues: Ribulose bisphosphate carboxylase large chain (475 aa).

Positions 1-2 are excised as a propeptide; sequence MS. P3 is subject to N-acetylproline. K14 is subject to N6,N6,N6-trimethyllysine. The substrate site is built by N123 and T173. Residue K175 is the Proton acceptor of the active site. K177 lines the substrate pocket. Residues K201, D203, and E204 each contribute to the Mg(2+) site. K201 is modified (N6-carboxylysine). The active-site Proton acceptor is the H294. 3 residues coordinate substrate: R295, H327, and S379.

This sequence belongs to the RuBisCO large chain family. Type I subfamily. In terms of assembly, heterohexadecamer of 8 large chains and 8 small chains. Requires Mg(2+) as cofactor.

It localises to the plastid. Its subcellular location is the chloroplast. It catalyses the reaction 2 (2R)-3-phosphoglycerate + 2 H(+) = D-ribulose 1,5-bisphosphate + CO2 + H2O. The catalysed reaction is D-ribulose 1,5-bisphosphate + O2 = 2-phosphoglycolate + (2R)-3-phosphoglycerate + 2 H(+). Functionally, ruBisCO catalyzes two reactions: the carboxylation of D-ribulose 1,5-bisphosphate, the primary event in carbon dioxide fixation, as well as the oxidative fragmentation of the pentose substrate in the photorespiration process. Both reactions occur simultaneously and in competition at the same active site. In Coleochaete orbicularis (Charophycean green alga), this protein is Ribulose bisphosphate carboxylase large chain.